Here is a 362-residue protein sequence, read N- to C-terminus: Beta-ketoacyl-[acyl-carrier-protein] synthase III 2 (362 aa).

Catalysis depends on residues C113 and H251. The ACP-binding stretch occupies residues 252-256 (QANIR). N281 is a catalytic residue.

This sequence belongs to the thiolase-like superfamily. FabH family. In terms of assembly, homodimer.

It localises to the cytoplasm. It catalyses the reaction malonyl-[ACP] + acetyl-CoA + H(+) = 3-oxobutanoyl-[ACP] + CO2 + CoA. It functions in the pathway lipid metabolism; fatty acid biosynthesis. Its function is as follows. Catalyzes the condensation reaction of fatty acid synthesis by the addition to an acyl acceptor of two carbons from malonyl-ACP. Catalyzes the first condensation reaction which initiates fatty acid synthesis and may therefore play a role in governing the total rate of fatty acid production. Possesses both acetoacetyl-ACP synthase and acetyl transacylase activities. Its substrate specificity determines the biosynthesis of branched-chain and/or straight-chain of fatty acids. In Vibrio vulnificus (strain CMCP6), this protein is Beta-ketoacyl-[acyl-carrier-protein] synthase III 2.